The sequence spans 275 residues: Hemin import ATP-binding protein HmuV (275 aa).

One can recognise an ABC transporter domain in the interval 2–242 (LKAAGIGVRL…EWIETGFGLQ (241 aa)). 34 to 41 (GPNGAGKS) contributes to the ATP binding site.

This sequence belongs to the ABC transporter superfamily. Heme (hemin) importer (TC 3.A.1.14.5) family. In terms of assembly, the complex is composed of two ATP-binding proteins (HmuV), two transmembrane proteins (HmuU) and a solute-binding protein (HmuT).

The protein localises to the cell inner membrane. Functionally, part of the ABC transporter complex HmuTUV involved in hemin import. Responsible for energy coupling to the transport system. In Gloeobacter violaceus (strain ATCC 29082 / PCC 7421), this protein is Hemin import ATP-binding protein HmuV.